Reading from the N-terminus, the 630-residue chain is Chaperone protein HtpG (630 aa).

The interval 1 to 341 (MTQNATSETL…SADLPLNVSR (341 aa)) is a; substrate-binding. Residues 342–558 (EILQESRDVR…QNDLSPHLLR (217 aa)) form a b region. The segment at 559-630 (MLKAAGQEVP…KRLNALLLKV (72 aa)) is c.

Belongs to the heat shock protein 90 family. In terms of assembly, homodimer.

The protein resides in the cytoplasm. Molecular chaperone. Has ATPase activity. The polypeptide is Chaperone protein HtpG (Bordetella avium (strain 197N)).